Here is a 392-residue protein sequence, read N- to C-terminus: Tyrosine--tRNA ligase (392 aa).

Positions proline 39–histidine 48 match the 'HIGH' region motif. Residues lysine 223–serine 227 carry the 'KMSKS' region motif. Lysine 226 provides a ligand contact to ATP. Positions isoleucine 331–leucine 391 constitute an S4 RNA-binding domain.

Belongs to the class-I aminoacyl-tRNA synthetase family. TyrS type 2 subfamily. Homodimer.

Its subcellular location is the cytoplasm. It catalyses the reaction tRNA(Tyr) + L-tyrosine + ATP = L-tyrosyl-tRNA(Tyr) + AMP + diphosphate + H(+). Catalyzes the attachment of tyrosine to tRNA(Tyr) in a two-step reaction: tyrosine is first activated by ATP to form Tyr-AMP and then transferred to the acceptor end of tRNA(Tyr). The sequence is that of Tyrosine--tRNA ligase from Ralstonia nicotianae (strain ATCC BAA-1114 / GMI1000) (Ralstonia solanacearum).